Consider the following 269-residue polypeptide: uncharacterized protein (269 aa).

4 helical membrane passes run 64–84, 125–145, 169–189, and 230–250; these read FVYF…LAGV, YGIA…FLSF, FFIS…FLVL, and VFAT…IAIF.

The protein localises to the cell membrane. This is an uncharacterized protein from Mycoplasma genitalium (strain ATCC 33530 / DSM 19775 / NCTC 10195 / G37) (Mycoplasmoides genitalium).